Consider the following 253-residue polypeptide: Phosphoadenosine 5'-phosphosulfate reductase (253 aa).

Cys239 acts as the Nucleophile; cysteine thiosulfonate intermediate in catalysis.

It belongs to the PAPS reductase family. CysH subfamily.

It is found in the cytoplasm. The enzyme catalyses [thioredoxin]-disulfide + sulfite + adenosine 3',5'-bisphosphate + 2 H(+) = [thioredoxin]-dithiol + 3'-phosphoadenylyl sulfate. Its pathway is sulfur metabolism; hydrogen sulfide biosynthesis; sulfite from sulfate: step 3/3. Its function is as follows. Catalyzes the formation of sulfite from phosphoadenosine 5'-phosphosulfate (PAPS) using thioredoxin as an electron donor. This Photobacterium profundum (strain SS9) protein is Phosphoadenosine 5'-phosphosulfate reductase.